Consider the following 379-residue polypeptide: UDP-4-amino-4-deoxy-L-arabinose--oxoglutarate aminotransferase (379 aa).

Lys-182 is subject to N6-(pyridoxal phosphate)lysine.

It belongs to the DegT/DnrJ/EryC1 family. ArnB subfamily. In terms of assembly, homodimer. Pyridoxal 5'-phosphate is required as a cofactor.

The catalysed reaction is UDP-4-amino-4-deoxy-beta-L-arabinose + 2-oxoglutarate = UDP-beta-L-threo-pentopyranos-4-ulose + L-glutamate. It participates in nucleotide-sugar biosynthesis; UDP-4-deoxy-4-formamido-beta-L-arabinose biosynthesis; UDP-4-deoxy-4-formamido-beta-L-arabinose from UDP-alpha-D-glucuronate: step 2/3. The protein operates within bacterial outer membrane biogenesis; lipopolysaccharide biosynthesis. Functionally, catalyzes the conversion of UDP-4-keto-arabinose (UDP-Ara4O) to UDP-4-amino-4-deoxy-L-arabinose (UDP-L-Ara4N). The modified arabinose is attached to lipid A and is required for resistance to polymyxin and cationic antimicrobial peptides. This Escherichia fergusonii (strain ATCC 35469 / DSM 13698 / CCUG 18766 / IAM 14443 / JCM 21226 / LMG 7866 / NBRC 102419 / NCTC 12128 / CDC 0568-73) protein is UDP-4-amino-4-deoxy-L-arabinose--oxoglutarate aminotransferase.